The sequence spans 108 residues: UPF0060 membrane protein CKO_01576 (108 aa).

4 helical membrane-spanning segments follow: residues 6 to 26 (LLFFMTALCEIVGCFLPWLWL), 29 to 49 (GATAWLLVPAGVSLALFVWLL), 61 to 81 (AAYGGVYVCTALLWLRFVDGV), and 85 to 105 (LYDWSGALIALCGMLIIVAGW).

This sequence belongs to the UPF0060 family.

Its subcellular location is the cell inner membrane. This Citrobacter koseri (strain ATCC BAA-895 / CDC 4225-83 / SGSC4696) protein is UPF0060 membrane protein CKO_01576.